A 238-amino-acid chain; its full sequence is Probable transcriptional regulatory protein YcdB (238 aa).

This sequence belongs to the TACO1 family. YeeN subfamily.

It localises to the cytoplasm. This is Probable transcriptional regulatory protein YcdB (ycdB) from Lactococcus lactis subsp. lactis (strain IL1403) (Streptococcus lactis).